Reading from the N-terminus, the 367-residue chain is Protein pxr1 (367 aa).

Disordered regions lie at residues 1–28 (MGLS…TDSF) and 156–336 (KALK…PMGI). Over residues 15-27 (DPNNTKWSGNTDS) the composition is skewed to polar residues. Residues 25 to 79 (TDSFGHRMMKSQGWTPGEYLGAKDAAHAEFHTAANASHIRVVIKDNNLGLGAKIG) enclose the G-patch domain. Acidic residues predominate over residues 167-182 (SSDDSDSSSDEEEEEK). Composition is skewed to basic residues over residues 209 to 221 (SKKS…SKKR), 236 to 248 (KSKK…KSKS), and 265 to 277 (KARK…KKRR). Residues 282–296 (ATAGADTEETSSTSK) show a composition bias toward low complexity. Positions 297–309 (SSKKNSKKDKHKS) are enriched in basic residues. Low complexity predominate over residues 310-328 (SSASESSTKESTPTVTESS).

This sequence belongs to the PINX1 family.

The protein resides in the nucleus. It is found in the nucleolus. Involved in rRNA-processing at A0, A1 and A2 sites and negatively regulates telomerase. This Sclerotinia sclerotiorum (strain ATCC 18683 / 1980 / Ss-1) (White mold) protein is Protein pxr1 (pxr1).